The following is a 556-amino-acid chain: Formate--tetrahydrofolate ligase 1 (556 aa).

ATP is bound at residue 65 to 72; the sequence is TPAGEGKS.

This sequence belongs to the formate--tetrahydrofolate ligase family.

The enzyme catalyses (6S)-5,6,7,8-tetrahydrofolate + formate + ATP = (6R)-10-formyltetrahydrofolate + ADP + phosphate. The protein operates within one-carbon metabolism; tetrahydrofolate interconversion. This is Formate--tetrahydrofolate ligase 1 from Streptococcus pyogenes serotype M1.